The sequence spans 299 residues: Bifunctional protein FolD (299 aa).

NADP(+) is bound by residues 168–170 (GRS), Ser-193, and Ile-234.

This sequence belongs to the tetrahydrofolate dehydrogenase/cyclohydrolase family. In terms of assembly, homodimer.

The catalysed reaction is (6R)-5,10-methylene-5,6,7,8-tetrahydrofolate + NADP(+) = (6R)-5,10-methenyltetrahydrofolate + NADPH. It catalyses the reaction (6R)-5,10-methenyltetrahydrofolate + H2O = (6R)-10-formyltetrahydrofolate + H(+). The protein operates within one-carbon metabolism; tetrahydrofolate interconversion. In terms of biological role, catalyzes the oxidation of 5,10-methylenetetrahydrofolate to 5,10-methenyltetrahydrofolate and then the hydrolysis of 5,10-methenyltetrahydrofolate to 10-formyltetrahydrofolate. The sequence is that of Bifunctional protein FolD from Bartonella quintana (strain Toulouse) (Rochalimaea quintana).